We begin with the raw amino-acid sequence, 660 residues long: Acetyl-coenzyme A synthetase (660 aa).

CoA is bound by residues 197–200 (RGGK) and threonine 317. Residues 397–399 (GEP), 421–426 (DTFWQT), aspartate 512, and arginine 528 contribute to the ATP site. Serine 536 contributes to the CoA binding site. Arginine 539 serves as a coordination point for ATP. 2 residues coordinate Mg(2+): valine 550 and valine 555. Lysine 625 is modified (N6-acetyllysine).

This sequence belongs to the ATP-dependent AMP-binding enzyme family. It depends on Mg(2+) as a cofactor. In terms of processing, acetylated. Deacetylation by the SIR2-homolog deacetylase activates the enzyme.

The catalysed reaction is acetate + ATP + CoA = acetyl-CoA + AMP + diphosphate. Catalyzes the conversion of acetate into acetyl-CoA (AcCoA), an essential intermediate at the junction of anabolic and catabolic pathways. AcsA undergoes a two-step reaction. In the first half reaction, AcsA combines acetate with ATP to form acetyl-adenylate (AcAMP) intermediate. In the second half reaction, it can then transfer the acetyl group from AcAMP to the sulfhydryl group of CoA, forming the product AcCoA. The polypeptide is Acetyl-coenzyme A synthetase (Herminiimonas arsenicoxydans).